Consider the following 417-residue polypeptide: NADH-quinone oxidoreductase subunit D (417 aa).

The protein belongs to the complex I 49 kDa subunit family. NDH-1 is composed of 14 different subunits. Subunits NuoB, C, D, E, F, and G constitute the peripheral sector of the complex.

The protein localises to the cell inner membrane. The enzyme catalyses a quinone + NADH + 5 H(+)(in) = a quinol + NAD(+) + 4 H(+)(out). Its function is as follows. NDH-1 shuttles electrons from NADH, via FMN and iron-sulfur (Fe-S) centers, to quinones in the respiratory chain. The immediate electron acceptor for the enzyme in this species is believed to be ubiquinone. Couples the redox reaction to proton translocation (for every two electrons transferred, four hydrogen ions are translocated across the cytoplasmic membrane), and thus conserves the redox energy in a proton gradient. This chain is NADH-quinone oxidoreductase subunit D, found in Coxiella burnetii (strain Dugway 5J108-111).